The primary structure comprises 198 residues: Carnitine operon protein CaiE (198 aa).

Positions 179–198 are disordered; the sequence is VEENRPRLKGTTDVKPKSAQ. A compositionally biased stretch (basic and acidic residues) spans 180–198; it reads EENRPRLKGTTDVKPKSAQ.

Belongs to the transferase hexapeptide repeat family.

It participates in amine and polyamine metabolism; carnitine metabolism. Its function is as follows. Overproduction of CaiE stimulates the activity of CaiB and CaiD. This chain is Carnitine operon protein CaiE, found in Salmonella choleraesuis (strain SC-B67).